Reading from the N-terminus, the 214-residue chain is Germin-like protein (214 aa).

The first 22 residues, 1–22 (MVMMRIFFFLFLLAFPVFTANA), serve as a signal peptide directing secretion. Residues cysteine 28 and cysteine 44 are joined by a disulfide bond. The 147-residue stretch at 58 to 204 (SGLAKPGNTT…TTCLDEATIK (147 aa)) folds into the Cupin type-1 domain. 3 residues coordinate Mn(2+): histidine 106, histidine 108, and glutamate 113.

The protein belongs to the germin family. Oligomer (believed to be a pentamer but probably hexamer). In terms of tissue distribution, cotyledons and leaves.

It is found in the secreted. The protein localises to the extracellular space. The protein resides in the apoplast. The sequence is that of Germin-like protein (GLP) from Ipomoea nil (Japanese morning glory).